A 425-amino-acid chain; its full sequence is Serine--tRNA ligase (425 aa).

228-230 (TAE) serves as a coordination point for L-serine. 259 to 261 (RSE) is an ATP binding site. E282 serves as a coordination point for L-serine. 346–349 (EIAS) provides a ligand contact to ATP. S382 is a binding site for L-serine.

Belongs to the class-II aminoacyl-tRNA synthetase family. Type-1 seryl-tRNA synthetase subfamily. As to quaternary structure, homodimer. The tRNA molecule binds across the dimer.

Its subcellular location is the cytoplasm. It carries out the reaction tRNA(Ser) + L-serine + ATP = L-seryl-tRNA(Ser) + AMP + diphosphate + H(+). The catalysed reaction is tRNA(Sec) + L-serine + ATP = L-seryl-tRNA(Sec) + AMP + diphosphate + H(+). It participates in aminoacyl-tRNA biosynthesis; selenocysteinyl-tRNA(Sec) biosynthesis; L-seryl-tRNA(Sec) from L-serine and tRNA(Sec): step 1/1. Its function is as follows. Catalyzes the attachment of serine to tRNA(Ser). Is also able to aminoacylate tRNA(Sec) with serine, to form the misacylated tRNA L-seryl-tRNA(Sec), which will be further converted into selenocysteinyl-tRNA(Sec). This is Serine--tRNA ligase from Rickettsia akari (strain Hartford).